Reading from the N-terminus, the 20-residue chain is Glutathione S-transferase 2 (20 aa).

Residues 1-20 (GYKVTYFAIRGLAEPIXLLL) enclose the GST N-terminal domain. Residue Tyr6 coordinates glutathione.

The protein belongs to the GST superfamily. Sigma family.

It catalyses the reaction RX + glutathione = an S-substituted glutathione + a halide anion + H(+). Conjugation of reduced glutathione to a wide number of exogenous and endogenous hydrophobic electrophiles. This chain is Glutathione S-transferase 2 (GST2), found in Ascaris suum (Pig roundworm).